Consider the following 291-residue polypeptide: Probable aquaporin PIP2-4 (291 aa).

An N-acetylmethionine modification is found at Met-1. Positions 1–22 (MAKDLDVNESGPPAARDYKDPP) are disordered. At Ala-2 the chain carries N-acetylalanine; in Probable aquaporin PIP2-4, N-terminally processed. Over 2–39 (AKDLDVNESGPPAARDYKDPPPAPFFDMEELRKWPLYR) the chain is Cytoplasmic. Lys-3 is subject to N6,N6-dimethyllysine. The helical transmembrane segment at 40–60 (AVIAEFVATLLFLYVSILTVI) threads the bilayer. The Extracellular portion of the chain corresponds to 61–74 (GYKAQTDATAGGVD). A helical transmembrane segment spans residues 75 to 95 (CGGVGILGIAWAFGGMIFVLV). Over 96–125 (YCTAGISGGHINPAVTVGLFLARKVSLVRT) the chain is Cytoplasmic. Positions 107 to 109 (NPA) match the NPA 1 motif. A helical membrane pass occupies residues 126 to 146 (VLYIVAQCLGAICGCGFVKAF). Topologically, residues 147-167 (QSSYYTRYGGGANELADGYNK) are extracellular. Residues 168–188 (GTGLGAEIIGTFVLVYTVFSA) form a helical membrane-spanning segment. Residues 189–201 (TDPKRNARDSHVP) lie on the Cytoplasmic side of the membrane. A helical membrane pass occupies residues 202–222 (VLAPLPIGFAVFMVHLATIPI). Residues 223–249 (TGTGINPARSFGAAVIYNNEKAWDDQW) are Extracellular-facing. The NPA 2 signature appears at 228-230 (NPA). A helical membrane pass occupies residues 250-270 (IFWVGPMIGAAAAAFYHQFIL). At 271–291 (RAAAIKALGSFGSFGSFRSFA) the chain is on the cytoplasmic side. Phosphoserine is present on residues Ser-283, Ser-286, and Ser-289.

This sequence belongs to the MIP/aquaporin (TC 1.A.8) family. PIP (TC 1.A.8.11) subfamily. As to expression, expressed in roots.

Its subcellular location is the cell membrane. Its function is as follows. Aquaporins facilitate the transport of water and small neutral solutes across cell membranes. The sequence is that of Probable aquaporin PIP2-4 (PIP2-4) from Arabidopsis thaliana (Mouse-ear cress).